A 112-amino-acid polypeptide reads, in one-letter code: Integration host factor subunit alpha (112 aa).

The protein belongs to the bacterial histone-like protein family. Heterodimer of an alpha and a beta chain.

Its function is as follows. This protein is one of the two subunits of integration host factor, a specific DNA-binding protein that functions in genetic recombination as well as in transcriptional and translational control. This Agrobacterium fabrum (strain C58 / ATCC 33970) (Agrobacterium tumefaciens (strain C58)) protein is Integration host factor subunit alpha.